We begin with the raw amino-acid sequence, 718 residues long: Sodium/myo-inositol cotransporter (718 aa).

Over 1 to 9 (MRAVLETAD) the chain is Extracellular. The helical transmembrane segment at 10–29 (IAIVALYFILVMCIGFFAMW) threads the bilayer. At 30 to 38 (KSNRSTVSG) the chain is on the cytoplasmic side. A helical transmembrane segment spans residues 39 to 57 (YFLAGRSMTWVAIGASLFV). Residues 58–86 (SNIGSEHFIGLAGSGAASGFAVGAWEFNA) are Extracellular-facing. The helical transmembrane segment at 87 to 110 (LLLLQLLGWVFIPIYIRSGVYTMP) threads the bilayer. Over 111–123 (EYLSKRFGGHRIQ) the chain is Cytoplasmic. The chain crosses the membrane as a helical span at residues 124-144 (VYFAALSLILYIFTKLSVDLY). At 145-157 (SGALFIQESLGWN) the chain is on the extracellular side. Residues 158–183 (LYVSVILLIGMTALLTVTGGLVAVIY) traverse the membrane as a helical segment. Topologically, residues 184-186 (TDT) are cytoplasmic. The chain crosses the membrane as a helical span at residues 187 to 205 (LQALLMIVGALTLMIISMM). At 206-303 (EIGGFEEVKR…HAKGSTLMAG (98 aa)) the chain is on the extracellular side. N-linked (GlcNAc...) asparagine glycosylation occurs at Asn-232. Residues 304-324 (FLKLLPMFIIVVPGMISRILF) form a helical membrane-spanning segment. Residues 325–353 (ADDIACINPEHCMQVCGSRAGCSNIAYPR) lie on the Cytoplasmic side of the membrane. Residues 354-376 (LVMKLVPVGLRGLMMAVMIAALM) traverse the membrane as a helical segment. Residues 377-406 (SDLDSIFNSASTIFTLDVYKLIRRSASSRE) lie on the Extracellular side of the membrane. A helical transmembrane segment spans residues 407 to 430 (LMIVGRIFVAFMVVISIAWVPIIV). At 431-443 (EMQGGQMYLYIQE) the chain is on the cytoplasmic side. Residues 444-462 (VADYLTPPVAALFLLAIFW) form a helical membrane-spanning segment. Residues 463–510 (KRCNEQGAFYGGMAGFVLGAVRLTLAFAYRAPECDQPDNRPGFIKDIH) are Extracellular-facing. A helical transmembrane segment spans residues 511–532 (YMYVATALFWVTGLITVIVSLL). At 533 to 695 (TPPPTKEQIR…QMLEEPPQVK (163 aa)) the chain is on the cytoplasmic side. Ser-594 and Ser-632 each carry phosphoserine. Residues 696–716 (LILNIGLFAVCSLGIFMFVYF) form a helical membrane-spanning segment. The Extracellular segment spans residues 717–718 (SL).

The protein belongs to the sodium:solute symporter (SSF) (TC 2.A.21) family. As to quaternary structure, interacts with KCNQ2 (via the pore module). Interacts with KCNQ1; this interaction is direct. Forms coregulatory complexes with ion channels KCNQ2-KCNQ3 and KCNQ1-KCNE2. Kidney cortex and medulla.

The protein resides in the apical cell membrane. It is found in the basolateral cell membrane. The enzyme catalyses myo-inositol(out) + 2 Na(+)(out) = myo-inositol(in) + 2 Na(+)(in). It catalyses the reaction scyllo-inositol(out) + 2 Na(+)(out) = scyllo-inositol(in) + 2 Na(+)(in). Its activity is regulated as follows. Inhibited by phlorizin and phloretin. Electrogenic Na(+)-coupled sugar symporter that actively transports myo-inositol and its stereoisomer scyllo-inositol across the plasma membrane, with a Na(+) to sugar coupling ratio of 2:1. Maintains myo-inositol concentration gradient that defines cell volume and fluid balance during osmotic stress, in particular in the fetoplacental unit and central nervous system. Forms coregulatory complexes with voltage-gated K(+) ion channels, allosterically altering ion selectivity, voltage dependence and gating kinetics of the channel. In turn, K(+) efflux through the channel forms a local electrical gradient that modulates electrogenic Na(+)-coupled myo-inositol influx through the transporter. Associates with KCNQ1-KCNE2 channel in the apical membrane of choroid plexus epithelium and regulates the myo-inositol gradient between blood and cerebrospinal fluid with an impact on neuron excitability. Associates with KCNQ2-KCNQ3 channel altering ion selectivity, increasing Na(+) and Cs(+) permeation relative to K(+) permeation. Provides myo-inositol precursor for biosynthesis of phosphoinositides such as PI(4,5)P2, thus indirectly affecting the activity of phosphoinositide-dependent ion channels and Ca(2+) signaling upon osmotic stress. Has very low affinity for sugars such as L-fucose and L-xylose, with an affinity about three orders of magnitude lower than myo-inositol. The protein is Sodium/myo-inositol cotransporter (SLC5A3) of Canis lupus familiaris (Dog).